An 883-amino-acid polypeptide reads, in one-letter code: Protein P (883 aa).

Residues methionine 1–glutamine 183 are terminal protein domain (TP). Residues leucine 184–leucine 386 form a spacer region. The interval arginine 298–serine 344 is disordered. Residues aspartate 387–glutamine 728 are polymerase/reverse transcriptase domain (RT). One can recognise a Reverse transcriptase domain in the interval aspartate 397–isoleucine 638. Mg(2+) is bound by residues aspartate 469, aspartate 589, and aspartate 590.

Belongs to the hepadnaviridae P protein family.

The catalysed reaction is DNA(n) + a 2'-deoxyribonucleoside 5'-triphosphate = DNA(n+1) + diphosphate. The enzyme catalyses Endonucleolytic cleavage to 5'-phosphomonoester.. Its activity is regulated as follows. Activated by host HSP70 and HSP40 in vitro to be able to bind the epsilon loop of the pgRNA. Because deletion of the RNase H region renders the protein partly chaperone-independent, the chaperones may be needed indirectly to relieve occlusion of the RNA-binding site by this domain. Inhibited by several reverse-transcriptase inhibitors: Lamivudine, Adefovir and Entecavir. Functionally, multifunctional enzyme that converts the viral RNA genome into dsDNA in viral cytoplasmic capsids. This enzyme displays a DNA polymerase activity that can copy either DNA or RNA templates, and a ribonuclease H (RNase H) activity that cleaves the RNA strand of RNA-DNA heteroduplexes in a partially processive 3'- to 5'-endonucleasic mode. Neo-synthesized pregenomic RNA (pgRNA) are encapsidated together with the P protein, and reverse-transcribed inside the nucleocapsid. Initiation of reverse-transcription occurs first by binding the epsilon loop on the pgRNA genome, and is initiated by protein priming, thereby the 5'-end of (-)DNA is covalently linked to P protein. Partial (+)DNA is synthesized from the (-)DNA template and generates the relaxed circular DNA (RC-DNA) genome. After budding and infection, the RC-DNA migrates in the nucleus, and is converted into a plasmid-like covalently closed circular DNA (cccDNA). The activity of P protein does not seem to be necessary for cccDNA generation, and is presumably released from (+)DNA by host nuclear DNA repair machinery. The sequence is that of Protein P from Woodchuck hepatitis B virus (isolate 2) (WHV).